Here is a 115-residue protein sequence, read N- to C-terminus: DNA-binding protein APE_1087b (115 aa).

The protein belongs to the PDCD5 family.

The polypeptide is DNA-binding protein APE_1087b (Aeropyrum pernix (strain ATCC 700893 / DSM 11879 / JCM 9820 / NBRC 100138 / K1)).